Reading from the N-terminus, the 155-residue chain is MGGNGSTCKPDTERQGTLSTAAPTTSPAPCLSNHHNKKHLILAFCAGVLLTLLLIAFIFLIIKSYRKYRRERLPISPGPLLRWVPLLSGTMADHSKPQAPDPHSDPPAKLSSIPGESLTYASTTFKLSEEKSNHLAENHSADFDPIVYAQIKVTN.

Residues 1-28 (MGGNGSTCKPDTERQGTLSTAAPTTSPA) form a disordered region. Over residues 19 to 28 (STAAPTTSPA) the composition is skewed to low complexity. A helical membrane pass occupies residues 41-61 (ILAFCAGVLLTLLLIAFIFLI). The segment at 92–114 (ADHSKPQAPDPHSDPPAKLSSIP) is disordered. The residue at position 140 (Ser140) is a Phosphoserine.

The protein localises to the membrane. This is Transmembrane protein C1orf162 (C1orf162) from Homo sapiens (Human).